The chain runs to 306 residues: Glutathione transport system permease protein GsiC (306 aa).

The Cytoplasmic portion of the chain corresponds to 1 to 8; sequence MLNYVIKR. The chain crosses the membrane as a helical span at residues 9–29; that stretch reads LLGLIPTLFIVSVLVFLFVHM. Residues 30-102 are Periplasmic-facing; sequence LPGDPARLIA…SRFMPTLWLT (73 aa). The ABC transmembrane type-1 domain maps to 95 to 292; that stretch reads FMPTLWLTIT…LEFILINLVV (198 aa). Residues 103-123 form a helical membrane-spanning segment; the sequence is ITSMVWAVIFGMAAGIIAAVW. The Cytoplasmic portion of the chain corresponds to 124–134; it reads RNRWPDRLSMT. The chain crosses the membrane as a helical span at residues 135-155; sequence IAVSGISFPAFALGMLLIQVF. Over 156–168 the chain is Periplasmic; that stretch reads SVELGWLPTVGAD. Residues 169–189 traverse the membrane as a helical segment; sequence SWQHYILSSLTLGAAVAAVMA. Over 190–228 the chain is Cytoplasmic; the sequence is RFTRASFVDVLSEDYMRTARAKGVSETWVVLKHGLRNAM. A helical membrane pass occupies residues 229 to 249; the sequence is IPVVTMMGLQFGFLLGGSIVV. Over 250-277 the chain is Periplasmic; it reads EKVFNWPGLGRLLVDSVEMRDYPVIQAE. Residues 278 to 298 form a helical membrane-spanning segment; the sequence is ILLFSLEFILINLVVDVLYAA. The Cytoplasmic segment spans residues 299-306; that stretch reads INPAIRYK.

Belongs to the binding-protein-dependent transport system permease family. The complex is composed of two ATP-binding proteins (GsiA), two transmembrane proteins (GsiC and GsiD) and a solute-binding protein (GsiB).

The protein localises to the cell inner membrane. Functionally, part of the ABC transporter complex GsiABCD involved in glutathione import. Probably responsible for the translocation of the substrate across the membrane. The protein is Glutathione transport system permease protein GsiC of Shigella boydii serotype 4 (strain Sb227).